The primary structure comprises 70 residues: Small ribosomal subunit protein bS21 (70 aa).

This sequence belongs to the bacterial ribosomal protein bS21 family.

The protein is Small ribosomal subunit protein bS21 of Nitratiruptor sp. (strain SB155-2).